Consider the following 96-residue polypeptide: Large ribosomal subunit protein uL23 (96 aa).

The protein belongs to the universal ribosomal protein uL23 family. As to quaternary structure, part of the 50S ribosomal subunit. Contacts protein L29, and trigger factor when it is bound to the ribosome.

One of the early assembly proteins it binds 23S rRNA. One of the proteins that surrounds the polypeptide exit tunnel on the outside of the ribosome. Forms the main docking site for trigger factor binding to the ribosome. This Clostridioides difficile (strain 630) (Peptoclostridium difficile) protein is Large ribosomal subunit protein uL23.